The sequence spans 164 residues: MVTFHTNHGDIVIKTFDDKAPETVKNFLDYCREGFYNNTIFHRVINGFMIQGGGFEPGMKQKATKEPIKNEANNGLKNTRGTLAMARTQAPHSATAQFFINVVDNDFLNFSGESLQGWGYCVFAEVVDGMDVVDKIKGVATGRSGMHQDVPKEDVIIESVTVSE.

Positions 1–162 constitute a PPIase cyclophilin-type domain; the sequence is MVTFHTNHGD…EDVIIESVTV (162 aa).

This sequence belongs to the cyclophilin-type PPIase family.

Its subcellular location is the cytoplasm. It carries out the reaction [protein]-peptidylproline (omega=180) = [protein]-peptidylproline (omega=0). Its activity is regulated as follows. Inhibition by cyclosporin A with a Ki of 25 to 50 mu-mol, a concentration 1000-fold higher than that required for eukaryotic PPIases. Functionally, PPIases accelerate the folding of proteins. It catalyzes the cis-trans isomerization of proline imidic peptide bonds in oligopeptides. This chain is Peptidyl-prolyl cis-trans isomerase B (ppiB), found in Escherichia coli (strain K12).